Here is a 391-residue protein sequence, read N- to C-terminus: Acetate kinase (391 aa).

Asparagine 7 lines the Mg(2+) pocket. An ATP-binding site is contributed by lysine 14. Substrate is bound at residue arginine 88. Aspartate 145 functions as the Proton donor/acceptor in the catalytic mechanism. Residues 203 to 207 (HAGNG), 278 to 280 (DAR), and 326 to 330 (GMGEN) each bind ATP. Glutamate 378 is a Mg(2+) binding site.

Belongs to the acetokinase family. Homodimer. The cofactor is Mg(2+). Mn(2+) is required as a cofactor.

It is found in the cytoplasm. The catalysed reaction is acetate + ATP = acetyl phosphate + ADP. The protein operates within metabolic intermediate biosynthesis; acetyl-CoA biosynthesis; acetyl-CoA from acetate: step 1/2. Catalyzes the formation of acetyl phosphate from acetate and ATP. Can also catalyze the reverse reaction. This is Acetate kinase from Phytoplasma mali (strain AT).